The primary structure comprises 481 residues: tRNA:m(4)X modification enzyme TRM13 homolog (481 aa).

An N-acetylalanine modification is found at Ala-2. The CHHC U11-48K-type zinc-finger motif lies at 56–83; that stretch reads RILCPLDPKHTVYEDQLAKHLKKCNSRE. Zn(2+) is bound by residues Cys-59, His-65, His-75, and Cys-79. A coiled-coil region spans residues 113-140; sequence SLSEEQLEKLIKKLRKASEGLNSTLKDH. A disordered region spans residues 381-408; that stretch reads ETSNSTTKRQDNQNDDSEEHDDGGYRIT.

This sequence belongs to the methyltransferase TRM13 family.

The catalysed reaction is cytidine(4) in tRNA(Pro) + S-adenosyl-L-methionine = 2'-O-methylcytidine(4) in tRNA(Pro) + S-adenosyl-L-homocysteine + H(+). It carries out the reaction cytidine(4) in tRNA(Gly)(GCC) + S-adenosyl-L-methionine = 2'-O-methylcytidine(4) in tRNA(Gly)(GCC) + S-adenosyl-L-homocysteine + H(+). It catalyses the reaction adenosine(4) in tRNA(His) + S-adenosyl-L-methionine = 2'-O-methyladenosine(4) in tRNA(His) + S-adenosyl-L-homocysteine + H(+). Its function is as follows. tRNA methylase which 2'-O-methylates cytidine(4) in tRNA(Pro) and tRNA(Gly)(GCC), and adenosine(4) in tRNA(His). This Homo sapiens (Human) protein is tRNA:m(4)X modification enzyme TRM13 homolog (TRMT13).